Reading from the N-terminus, the 583-residue chain is Arginine--tRNA ligase (583 aa).

The 'HIGH' region signature appears at 123–133; it reads PNIAKEMHVGH.

The protein belongs to the class-I aminoacyl-tRNA synthetase family. As to quaternary structure, monomer.

Its subcellular location is the cytoplasm. It catalyses the reaction tRNA(Arg) + L-arginine + ATP = L-arginyl-tRNA(Arg) + AMP + diphosphate. This chain is Arginine--tRNA ligase, found in Blochmanniella floridana.